The primary structure comprises 129 residues: MSNVPAELKYSKEHEWLRKEADGTYTVGITEHAQELLGDMVFVDLPEVGATVSAGDDCAVAESVKAASDIYAPVSGEIVEVNDALSDSPELVNSEPYAGGWIFKIKASDESELESLLDATAYEALLEDE.

Residues 24-106 (TYTVGITEHA…YAGGWIFKIK (83 aa)) form the Lipoyl-binding domain. At Lys65 the chain carries N6-lipoyllysine.

The protein belongs to the GcvH family. The glycine cleavage system is composed of four proteins: P, T, L and H. (R)-lipoate is required as a cofactor.

Its function is as follows. The glycine cleavage system catalyzes the degradation of glycine. The H protein shuttles the methylamine group of glycine from the P protein to the T protein. The chain is Glycine cleavage system H protein from Escherichia coli O7:K1 (strain IAI39 / ExPEC).